We begin with the raw amino-acid sequence, 426 residues long: Serine/threonine-protein kinase ssn3 (426 aa).

A Protein kinase domain is found at 39 to 368; the sequence is YHIVGFISSG…AKEALEHPYF (330 aa). ATP-binding positions include 45-53 and K69; that span reads ISSGTYGRV. D171 functions as the Proton acceptor in the catalytic mechanism. A compositionally biased stretch (basic and acidic residues) spans 389 to 398; that stretch reads RRITHDDNDI. The disordered stretch occupies residues 389 to 426; the sequence is RRITHDDNDIRSGSLPGTKRSGLPDDSLMSRAAKRMKE.

The protein belongs to the protein kinase superfamily. CMGC Ser/Thr protein kinase family. CDC2/CDKX subfamily. As to quaternary structure, component of the srb8-11 complex, a regulatory module of the Mediator complex. It depends on Mg(2+) as a cofactor.

It is found in the nucleus. The catalysed reaction is L-seryl-[protein] + ATP = O-phospho-L-seryl-[protein] + ADP + H(+). It catalyses the reaction L-threonyl-[protein] + ATP = O-phospho-L-threonyl-[protein] + ADP + H(+). The enzyme catalyses [DNA-directed RNA polymerase] + ATP = phospho-[DNA-directed RNA polymerase] + ADP + H(+). Component of the srb8-11 complex. The srb8-11 complex is a regulatory module of the Mediator complex which is itself involved in regulation of basal and activated RNA polymerase II-dependent transcription. The srb8-11 complex may be involved in the transcriptional repression of a subset of genes regulated by Mediator. It may inhibit the association of the Mediator complex with RNA polymerase II to form the holoenzyme complex. The srb8-11 complex phosphorylates the C-terminal domain (CTD) of the largest subunit of RNA polymerase II. The protein is Serine/threonine-protein kinase ssn3 (ssn3) of Emericella nidulans (strain FGSC A4 / ATCC 38163 / CBS 112.46 / NRRL 194 / M139) (Aspergillus nidulans).